Consider the following 347-residue polypeptide: Selenide, water dikinase (347 aa).

Cysteine 17 is a catalytic residue. ATP is bound by residues lysine 20 and 48 to 50 (TRD). Aspartate 51 serves as a coordination point for Mg(2+). ATP-binding positions include aspartate 68, aspartate 91, and 139–141 (GHS). Aspartate 91 contacts Mg(2+). Aspartate 227 contributes to the Mg(2+) binding site.

It belongs to the selenophosphate synthase 1 family. Class I subfamily. Homodimer. The cofactor is Mg(2+).

The enzyme catalyses hydrogenselenide + ATP + H2O = selenophosphate + AMP + phosphate + 2 H(+). Its function is as follows. Synthesizes selenophosphate from selenide and ATP. The sequence is that of Selenide, water dikinase from Escherichia coli O139:H28 (strain E24377A / ETEC).